We begin with the raw amino-acid sequence, 665 residues long: Protein-arginine deiminase type-2 (665 aa).

Residues Asp-123, Asp-125, Asp-127, Glu-131, Asn-154, Asp-156, Asp-158, Asp-166, Asp-169, Lys-171, Asp-177, Asp-180, Glu-354, Asp-389, Phe-408, Leu-411, and Glu-412 each coordinate Ca(2+). The active-site Nucleophile is Cys-647.

The protein belongs to the protein arginine deiminase family. In terms of assembly, homodimer. It depends on Ca(2+) as a cofactor. In terms of tissue distribution, spinal cord, submaxillary gland, cerebrum, cerebellum, and skeletal muscle.

It localises to the cytoplasm. The catalysed reaction is L-arginyl-[protein] + H2O = L-citrullyl-[protein] + NH4(+). In terms of biological role, catalyzes the deimination of arginine residues of proteins. The sequence is that of Protein-arginine deiminase type-2 (Padi2) from Rattus norvegicus (Rat).